Here is a 754-residue protein sequence, read N- to C-terminus: Nitrate reductase (754 aa).

A signal peptide (tat-type signal) is located at residues 1–31 (MKFTRRSFVKASALATAMVAAGCSPQPVAPK). One can recognise a 4Fe-4S Mo/W bis-MGD-type domain in the interval 39–95 (ATWYKTVCRYCGVGCGVMVAAKDNRVVAVKGDTENPVNKGLLCVKGYYLDRIMNTEE). [4Fe-4S] cluster is bound by residues cysteine 46, cysteine 49, cysteine 53, and cysteine 81. Residues lysine 83, glutamine 144, asparagine 169, cysteine 173, 256 to 258 (GTD), methionine 341, glutamine 345, asparagine 451, lysine 497, aspartate 524, 642 to 651 (TGRILEHWHT), asparagine 728, and lysine 745 contribute to the Mo-bis(molybdopterin guanine dinucleotide) site.

It belongs to the prokaryotic molybdopterin-containing oxidoreductase family. NasA/NapA/NarB subfamily. As to quaternary structure, component of the nitrate reductase NapAB complex composed of NapA and NapB. The cofactor is [4Fe-4S] cluster. It depends on Mo-bis(molybdopterin guanine dinucleotide) as a cofactor. Predicted to be exported by the Tat system. The position of the signal peptide cleavage has not been experimentally proven.

The protein resides in the secreted. It carries out the reaction 2 Fe(II)-[cytochrome] + nitrate + 2 H(+) = 2 Fe(III)-[cytochrome] + nitrite + H2O. Its function is as follows. Catalytic subunit of the nitrate reductase complex NapAB. Receives electrons from NapB and catalyzes the reduction of nitrate to nitrite. This Symbiobacterium thermophilum (strain DSM 24528 / JCM 14929 / IAM 14863 / T) protein is Nitrate reductase.